An 88-amino-acid chain; its full sequence is Small ribosomal subunit protein bS20 (88 aa).

Residues 1 to 25 form a disordered region; it reads MANSAQARKRARQATKARAHNASLR. Basic residues predominate over residues 7–19; it reads ARKRARQATKARA.

It belongs to the bacterial ribosomal protein bS20 family.

In terms of biological role, binds directly to 16S ribosomal RNA. The polypeptide is Small ribosomal subunit protein bS20 (Azoarcus sp. (strain BH72)).